Consider the following 341-residue polypeptide: Protein pelota homolog (341 aa).

This sequence belongs to the eukaryotic release factor 1 family. Pelota subfamily. As to quaternary structure, monomer. The cofactor is a divalent metal cation.

It is found in the cytoplasm. May function in recognizing stalled ribosomes, interact with stem-loop structures in stalled mRNA molecules, and effect endonucleolytic cleavage of the mRNA. May play a role in the release non-functional ribosomes and degradation of damaged mRNAs. Has endoribonuclease activity. This chain is Protein pelota homolog, found in Sulfurisphaera tokodaii (strain DSM 16993 / JCM 10545 / NBRC 100140 / 7) (Sulfolobus tokodaii).